The primary structure comprises 198 residues: DNA damage response protein D (198 aa).

The tract at residues 124–198 (SAAPTDPAGP…SEAGENTPAA (75 aa)) is disordered. Residues 136-180 (PGTDRAERTAAERTASERATHDRASTERPARPRRSAEPEAVRTED) show a composition bias toward basic and acidic residues.

Functionally, appears to contribute to D.radiodurans capacity to survive exposure to ionizing radiation. May play a role in DNA repair and genome reconstitution. In Deinococcus radiodurans (strain ATCC 13939 / DSM 20539 / JCM 16871 / CCUG 27074 / LMG 4051 / NBRC 15346 / NCIMB 9279 / VKM B-1422 / R1), this protein is DNA damage response protein D (ddrD).